Reading from the N-terminus, the 620-residue chain is Chaperone protein HscA homolog (620 aa).

This sequence belongs to the heat shock protein 70 family.

Chaperone involved in the maturation of iron-sulfur cluster-containing proteins. Has a low intrinsic ATPase activity which is markedly stimulated by HscB. This chain is Chaperone protein HscA homolog, found in Shewanella baltica (strain OS155 / ATCC BAA-1091).